The chain runs to 144 residues: Transcriptional regulator MraZ (144 aa).

2 consecutive SpoVT-AbrB domains span residues 4–47 (EYKN…TADK) and 77–120 (AQEI…DLKQ).

Belongs to the MraZ family. Forms oligomers.

Its subcellular location is the cytoplasm. The protein resides in the nucleoid. This chain is Transcriptional regulator MraZ, found in Treponema denticola (strain ATCC 35405 / DSM 14222 / CIP 103919 / JCM 8153 / KCTC 15104).